The following is a 330-amino-acid chain: MTLIVTGAAGFIGANIVKALNERGETRIIAVDNLTRADKFKNLVDCEIDDYLDKTEFVERFARGDFGKVRAVFHEGACSDTMETDGRYMMDNNFRYSRAVLDACLAQGTQFLYASSAAIYGGSSRFVEAREFEAPLNVYGYSKFLFDQVIRRVMPSAKSQIAGFRYFNVYGPRESHKGRMASVAFHNFNQFRAEGKVKLFGEYNGYGPGEQTRDFVSVEDVAKVNLHFFDHPQKSGIFNLGTGRAQPFNDIATTVVNTLRALEGQPALTLAEQVEQGLVEYVPFPDALRGKYQCFTQADQTTLRAAGYDAPFLTVQEGVDRYVRWLFGQL.

Residues 11–12 (FI), 32–33 (DN), Lys-39, Lys-54, 75–79 (EGACS), and Asn-92 each bind NADP(+). Tyr-139 serves as the catalytic Proton acceptor. NADP(+) is bound at residue Lys-143. Position 168 (Asn-168) interacts with substrate. NADP(+) contacts are provided by Val-169 and Lys-177. Catalysis depends on Lys-177, which acts as the Proton acceptor. Substrate contacts are provided by residues Arg-179, His-186, 200-203 (FGEY), Arg-213, and Tyr-292.

Belongs to the NAD(P)-dependent epimerase/dehydratase family. HldD subfamily. As to quaternary structure, homopentamer. It depends on NADP(+) as a cofactor.

It carries out the reaction ADP-D-glycero-beta-D-manno-heptose = ADP-L-glycero-beta-D-manno-heptose. It functions in the pathway nucleotide-sugar biosynthesis; ADP-L-glycero-beta-D-manno-heptose biosynthesis; ADP-L-glycero-beta-D-manno-heptose from D-glycero-beta-D-manno-heptose 7-phosphate: step 4/4. Functionally, catalyzes the interconversion between ADP-D-glycero-beta-D-manno-heptose and ADP-L-glycero-beta-D-manno-heptose via an epimerization at carbon 6 of the heptose. The chain is ADP-L-glycero-D-manno-heptose-6-epimerase from Burkholderia pseudomallei (strain K96243).